The chain runs to 489 residues: Cytochrome P450 71A26 (489 aa).

The chain crosses the membrane as a helical span at residues 1-21 (MMIMFFLLCSIIFVVTIIIFR). A heme-binding site is contributed by cysteine 431.

It belongs to the cytochrome P450 family. Heme is required as a cofactor.

Its subcellular location is the membrane. The chain is Cytochrome P450 71A26 (CYP71A26) from Arabidopsis thaliana (Mouse-ear cress).